Here is a 425-residue protein sequence, read N- to C-terminus: UDP-N-acetylglucosamine 1-carboxyvinyltransferase (425 aa).

Residue K22–N23 coordinates phosphoenolpyruvate. R98 contacts UDP-N-acetyl-alpha-D-glucosamine. Catalysis depends on C122, which acts as the Proton donor. C122 carries the post-translational modification 2-(S-cysteinyl)pyruvic acid O-phosphothioketal. UDP-N-acetyl-alpha-D-glucosamine is bound by residues R127–Q131, D313, and I335.

The protein belongs to the EPSP synthase family. MurA subfamily.

It localises to the cytoplasm. It catalyses the reaction phosphoenolpyruvate + UDP-N-acetyl-alpha-D-glucosamine = UDP-N-acetyl-3-O-(1-carboxyvinyl)-alpha-D-glucosamine + phosphate. It participates in cell wall biogenesis; peptidoglycan biosynthesis. Its function is as follows. Cell wall formation. Adds enolpyruvyl to UDP-N-acetylglucosamine. The sequence is that of UDP-N-acetylglucosamine 1-carboxyvinyltransferase from Xylella fastidiosa (strain M12).